The chain runs to 125 residues: Casein kinase I isoform alpha (125 aa).

Positions 1-125 constitute a Protein kinase domain; sequence GEEVAVKLES…LIDFGLAKKY (125 aa). Lys7 is a binding site for ATP. The active-site Proton acceptor is Asp97.

Belongs to the protein kinase superfamily. CK1 Ser/Thr protein kinase family. Casein kinase I subfamily. In terms of assembly, interacts with the Axin complex. Interacts with TUT1, leading to TUT1 phosphorylation. Interacts with FAM83A, FAM83B, FAM83C, FAM83D, FAM83E, FAM83F, FAM83G and FAM83H (via DUF1669). Interaction with FAM83H recruits CSNK1A1 to keratin filaments. Post-translationally, phosphorylated by MTOR in response to mitogenic stimulation, leading to its activation.

The protein resides in the cytoplasm. It is found in the cytoskeleton. It localises to the microtubule organizing center. Its subcellular location is the centrosome. The protein localises to the chromosome. The protein resides in the centromere. It is found in the kinetochore. It localises to the nucleus speckle. Its subcellular location is the cilium basal body. The protein localises to the spindle. It carries out the reaction L-seryl-[protein] + ATP = O-phospho-L-seryl-[protein] + ADP + H(+). It catalyses the reaction L-threonyl-[protein] + ATP = O-phospho-L-threonyl-[protein] + ADP + H(+). Its function is as follows. Casein kinases are operationally defined by their preferential utilization of acidic proteins such as caseins as substrates. It can phosphorylate a large number of proteins. Participates in Wnt signaling. Phosphorylates CTNNB1 at 'Ser-45'. May phosphorylate PER1 and PER2. May play a role in segregating chromosomes during mitosis. May play a role in keratin cytoskeleton disassembly and thereby, it may regulate epithelial cell migration. Acts as a positive regulator of mTORC1 and mTORC2 signaling in response to nutrients by mediating phosphorylation of DEPTOR inhibitor. Acts as an inhibitor of NLRP3 inflammasome assembly by mediating phosphorylation of NLRP3. The chain is Casein kinase I isoform alpha (CSNK1A1) from Sus scrofa (Pig).